Consider the following 264-residue polypeptide: tRNA pseudouridine synthase A (264 aa).

Asp52 serves as the catalytic Nucleophile. Tyr110 contributes to the substrate binding site.

The protein belongs to the tRNA pseudouridine synthase TruA family. As to quaternary structure, homodimer.

The enzyme catalyses uridine(38/39/40) in tRNA = pseudouridine(38/39/40) in tRNA. Its function is as follows. Formation of pseudouridine at positions 38, 39 and 40 in the anticodon stem and loop of transfer RNAs. This chain is tRNA pseudouridine synthase A, found in Wigglesworthia glossinidia brevipalpis.